We begin with the raw amino-acid sequence, 394 residues long: Formate-dependent phosphoribosylglycinamide formyltransferase (394 aa).

N(1)-(5-phospho-beta-D-ribosyl)glycinamide is bound by residues 22-23 (EL) and E82. Residues R114, K155, 160-165 (SSGKGQ), 195-198 (EGFV), and E203 each bind ATP. One can recognise an ATP-grasp domain in the interval 119–308 (RLAAETLKLP…EFALHVRAIL (190 aa)). Positions 267 and 279 each coordinate Mg(2+). N(1)-(5-phospho-beta-D-ribosyl)glycinamide contacts are provided by residues D286, K357, and 364 to 365 (RR).

The protein belongs to the PurK/PurT family. In terms of assembly, homodimer.

It carries out the reaction N(1)-(5-phospho-beta-D-ribosyl)glycinamide + formate + ATP = N(2)-formyl-N(1)-(5-phospho-beta-D-ribosyl)glycinamide + ADP + phosphate + H(+). The protein operates within purine metabolism; IMP biosynthesis via de novo pathway; N(2)-formyl-N(1)-(5-phospho-D-ribosyl)glycinamide from N(1)-(5-phospho-D-ribosyl)glycinamide (formate route): step 1/1. Functionally, involved in the de novo purine biosynthesis. Catalyzes the transfer of formate to 5-phospho-ribosyl-glycinamide (GAR), producing 5-phospho-ribosyl-N-formylglycinamide (FGAR). Formate is provided by PurU via hydrolysis of 10-formyl-tetrahydrofolate. This chain is Formate-dependent phosphoribosylglycinamide formyltransferase, found in Tolumonas auensis (strain DSM 9187 / NBRC 110442 / TA 4).